The sequence spans 338 residues: Acetoin:2,6-dichlorophenolindophenol oxidoreductase subunit beta (338 aa).

Tetramer of 2 alpha and 2 beta subunits.

Its pathway is ketone degradation; acetoin degradation. Functionally, catalyzes the 2,6-dichlorophenolindophenol-dependent cleavage of acetoin into acetate and acetaldehyde, in vitro. The beta subunit is probably not the catalytic subunit of the enzyme. The sequence is that of Acetoin:2,6-dichlorophenolindophenol oxidoreductase subunit beta (acoB) from Cupriavidus necator (strain ATCC 17699 / DSM 428 / KCTC 22496 / NCIMB 10442 / H16 / Stanier 337) (Ralstonia eutropha).